We begin with the raw amino-acid sequence, 175 residues long: Enhancer of mRNA-decapping protein 1 (175 aa).

Residues 1-27 (MSTDTMYFNSSRLLPSAGRNKTNNLIK) are compositionally biased toward polar residues. Disordered stretches follow at residues 1–113 (MSTD…KDDT) and 155–175 (GSTF…PSFL). Serine 2 carries the post-translational modification N-acetylserine. Over residues 35–47 (ARGNAAKNANNNN) the composition is skewed to low complexity. The segment covering 58–77 (LPNGQKPNFGHSSNKKPSFN) has biased composition (polar residues). Position 82 is a phosphoserine (serine 82). The segment covering 100–113 (NNKETPRQNNKDDT) has biased composition (basic and acidic residues).

It belongs to the EDC family.

Its subcellular location is the cytoplasm. Its function is as follows. mRNA-binding protein which stimulates mRNA decapping by DCP1 and DCP2. Involved in the regulation of expression of multiple genes involved in glycolysis and gluconeogenesis. This is Enhancer of mRNA-decapping protein 1 (EDC1) from Saccharomyces cerevisiae (strain ATCC 204508 / S288c) (Baker's yeast).